The primary structure comprises 347 residues: MSVMFDPQAAIYPFPPKPTPLNDDEKQFYREKIKRLLKERNAVMVAHYYTDPEIQQLAEETGGCISDSLEMARFGAKHAASTLLVAGVRFMGETAKILSPAKTILMPTLAAECSLDLGCPIDEFSAFCDAHPDRTVVVYANTSAAVKARADWVVTSSIAVELIEHLDSLGEKIIWAPDRHLGNYVQKQTGADVLCWQGACIVHDEFKTQALTRLKKIYPDAALLVHPESPQSIVEMADAVGSTSQLIKAAKTLPHRQLIVATDRGIFYKMQQAVPEKELLEAPTAGEGATCRSCAHCPWMAMNGLKAIAEGLEQGGAAHEIQVDAALREGALLPLNRMLDFATTLRA.

Iminosuccinate contacts are provided by H47 and S68. C113 is a binding site for [4Fe-4S] cluster. Iminosuccinate-binding positions include 139–141 (YAN) and S156. Position 200 (C200) interacts with [4Fe-4S] cluster. Residues 226 to 228 (HPE) and T243 each bind iminosuccinate. Position 297 (C297) interacts with [4Fe-4S] cluster.

It belongs to the quinolinate synthase family. Type 1 subfamily. [4Fe-4S] cluster serves as cofactor.

It is found in the cytoplasm. The catalysed reaction is iminosuccinate + dihydroxyacetone phosphate = quinolinate + phosphate + 2 H2O + H(+). It functions in the pathway cofactor biosynthesis; NAD(+) biosynthesis; quinolinate from iminoaspartate: step 1/1. Catalyzes the condensation of iminoaspartate with dihydroxyacetone phosphate to form quinolinate. This is Quinolinate synthase from Salmonella agona (strain SL483).